Consider the following 95-residue polypeptide: Small ribosomal subunit protein bS6 (95 aa).

It belongs to the bacterial ribosomal protein bS6 family.

In terms of biological role, binds together with bS18 to 16S ribosomal RNA. The chain is Small ribosomal subunit protein bS6 from Exiguobacterium sibiricum (strain DSM 17290 / CCUG 55495 / CIP 109462 / JCM 13490 / 255-15).